The following is a 360-amino-acid chain: Alpha-2-macroglobulin receptor-associated protein (360 aa).

Positions 1-28 (MAPRRERVSTLPRLQLLVLLLLPLMLVP) are cleaved as a signal peptide. Phosphoserine occurs at positions 53 and 138. A coiled-coil region spans residues 184 to 302 (EKIQEYNVLL…KHNHYQKQLE (119 aa)). Positions 240–356 (RLRKVSHQGY…DLSSRVSRAR (117 aa)) are LDL receptor binding. N271 is a glycosylation site (N-linked (GlcNAc...) asparagine). Residues 357–360 (HNEL) carry the Prevents secretion from ER motif.

The protein belongs to the alpha-2-MRAP family. Interacts with the LRP1/alpha-2-macroglobulin receptor heavy and light chains; the interaction is transient and coincides with a reduction of ligand binding by the receptor. Interacts with LRP2/glycoprotein 330. Interacts with LRP1B; binding is followed by internalization and degradation. Interacts with LDLR. Interacts with SORL1. Interacts with LRP1; this interaction is followed by rapid internalization. Post-translationally, N-glycosylated. Highly expressed in PYS-2 parietal endoderm cells and in the kidney. The RNA level increased about 10-fold during differentiation of F9 embryonal carcinoma cells to parietal endoderm cells.

It is found in the rough endoplasmic reticulum lumen. The protein localises to the endoplasmic reticulum-Golgi intermediate compartment lumen. The protein resides in the golgi apparatus. Its subcellular location is the cis-Golgi network. It localises to the golgi apparatus lumen. It is found in the endosome lumen. The protein localises to the cell surface. In terms of biological role, molecular chaperone for LDL receptor-related proteins that may regulate their ligand binding activity along the secretory pathway. In Mus musculus (Mouse), this protein is Alpha-2-macroglobulin receptor-associated protein (Lrpap1).